A 520-amino-acid polypeptide reads, in one-letter code: Keratin, type II cytoskeletal 72 (520 aa).

The interval 1 to 133 is head; sequence MSRQLTLYPG…DPEIQKVRAQ (133 aa). The coil 1A stretch occupies residues 134 to 169; the sequence is EREQIKALNNKFASFIDKVRFLEQQNQVLETKWELL. Residues 134–447 enclose the IF rod domain; sequence EREQIKALNN…KLLESEESRM (314 aa). Residues 170 to 188 form a linker 1 region; that stretch reads QQLDQNNSRRSLEPVHESY. The interval 189-280 is coil 1B; it reads ISNLQKQLEI…VLFEGEIAQM (92 aa). Residues 281-304 form a linker 12 region; that stretch reads QSHISDTSVILSMDNNRQLDLDSI. Residues 305 to 443 form a coil 2 region; sequence LAEVRAQYEE…ATYRKLLESE (139 aa). The tract at residues 444–520 is tail; that stretch reads ESRMAGEYPS…SSCVSKKASR (77 aa). Positions 495–520 are disordered; sequence GSCGSELKDPPAKTSASSCVSKKASR.

The protein belongs to the intermediate filament family. As to quaternary structure, heterotetramer of two type I and two type II keratins.

Its function is as follows. Has a role in hair formation. Specific component of keratin intermediate filaments in the inner root sheath (IRS) of the hair follicle. The sequence is that of Keratin, type II cytoskeletal 72 (Krt72) from Rattus norvegicus (Rat).